The following is a 51-amino-acid chain: Toxin CSTX-18 (51 aa).

4 disulfide bridges follow: Cys9-Cys22, Cys14-Cys27, Cys21-Cys36, and Cys29-Cys34.

In terms of processing, contains 4 disulfide bonds. As to expression, expressed by the venom gland.

The protein resides in the secreted. The sequence is that of Toxin CSTX-18 from Cupiennius salei (American wandering spider).